The primary structure comprises 351 residues: MIRAAIVGATGYTGAELVRLLARHREVELVGLTSRQYADQPYANVYPHLSGQVDLACQSQDIDHITDMADVVFLALPHGLSVPWVAECVRKGKKVVDLGADFRLRRAAVYEQWYHVTHEAPELLAEAVYGLPELKREQIQKARIIANPGCYPTASLLSIAPLCGQGLIREDRLIIDAKSGVSGAGRNANLAIIYGEVNENVKAYNVAKHRHNPEIEQEVAERAGLDPDAMAITFTPHLMPMTRGILTTVYADLKEGVQPTSEEVRNLYRQFYAGEPFIHVMDEGVWPQTKWSYGSNHAYIGLTVEARTGRVIITTAIDNLVKGASGQAIQNMNILFGLPETTGIEAAGIYP.

Cysteine 150 is an active-site residue.

Belongs to the NAGSA dehydrogenase family. Type 1 subfamily.

It localises to the cytoplasm. It carries out the reaction N-acetyl-L-glutamate 5-semialdehyde + phosphate + NADP(+) = N-acetyl-L-glutamyl 5-phosphate + NADPH + H(+). It participates in amino-acid biosynthesis; L-arginine biosynthesis; N(2)-acetyl-L-ornithine from L-glutamate: step 3/4. In terms of biological role, catalyzes the NADPH-dependent reduction of N-acetyl-5-glutamyl phosphate to yield N-acetyl-L-glutamate 5-semialdehyde. The protein is N-acetyl-gamma-glutamyl-phosphate reductase of Heliobacterium modesticaldum (strain ATCC 51547 / Ice1).